The chain runs to 213 residues: Pyridoxine/pyridoxamine 5'-phosphate oxidase (213 aa).

Residues arginine 57–arginine 62, phenylalanine 77–threonine 78, arginine 83, lysine 84, and glutamine 106 each bind FMN. Arginine 62 contributes to the substrate binding site. Substrate contacts are provided by tyrosine 124, arginine 128, and serine 132. Residues glycine 135–proline 163 are disordered. Glutamine 141–serine 142 provides a ligand contact to FMN. Basic and acidic residues predominate over residues leucine 145–proline 163. Tryptophan 186 is a binding site for FMN. Arginine 192–histidine 194 contributes to the substrate binding site. Residue arginine 196 coordinates FMN.

Belongs to the pyridoxamine 5'-phosphate oxidase family. Homodimer. FMN serves as cofactor.

The enzyme catalyses pyridoxamine 5'-phosphate + O2 + H2O = pyridoxal 5'-phosphate + H2O2 + NH4(+). It carries out the reaction pyridoxine 5'-phosphate + O2 = pyridoxal 5'-phosphate + H2O2. It participates in cofactor metabolism; pyridoxal 5'-phosphate salvage; pyridoxal 5'-phosphate from pyridoxamine 5'-phosphate: step 1/1. Its pathway is cofactor metabolism; pyridoxal 5'-phosphate salvage; pyridoxal 5'-phosphate from pyridoxine 5'-phosphate: step 1/1. Functionally, catalyzes the oxidation of either pyridoxine 5'-phosphate (PNP) or pyridoxamine 5'-phosphate (PMP) into pyridoxal 5'-phosphate (PLP). The polypeptide is Pyridoxine/pyridoxamine 5'-phosphate oxidase (Granulibacter bethesdensis (strain ATCC BAA-1260 / CGDNIH1)).